Reading from the N-terminus, the 95-residue chain is Aspartyl/glutamyl-tRNA(Asn/Gln) amidotransferase subunit C (95 aa).

It belongs to the GatC family. As to quaternary structure, heterotrimer of A, B and C subunits.

It carries out the reaction L-glutamyl-tRNA(Gln) + L-glutamine + ATP + H2O = L-glutaminyl-tRNA(Gln) + L-glutamate + ADP + phosphate + H(+). The catalysed reaction is L-aspartyl-tRNA(Asn) + L-glutamine + ATP + H2O = L-asparaginyl-tRNA(Asn) + L-glutamate + ADP + phosphate + 2 H(+). Allows the formation of correctly charged Asn-tRNA(Asn) or Gln-tRNA(Gln) through the transamidation of misacylated Asp-tRNA(Asn) or Glu-tRNA(Gln) in organisms which lack either or both of asparaginyl-tRNA or glutaminyl-tRNA synthetases. The reaction takes place in the presence of glutamine and ATP through an activated phospho-Asp-tRNA(Asn) or phospho-Glu-tRNA(Gln). The polypeptide is Aspartyl/glutamyl-tRNA(Asn/Gln) amidotransferase subunit C (Vesicomyosocius okutanii subsp. Calyptogena okutanii (strain HA)).